We begin with the raw amino-acid sequence, 159 residues long: UPF0336 protein MAP_4107 (159 aa).

This sequence belongs to the UPF0336 family.

The chain is UPF0336 protein MAP_4107 from Mycolicibacterium paratuberculosis (strain ATCC BAA-968 / K-10) (Mycobacterium paratuberculosis).